The sequence spans 250 residues: GTP cyclohydrolase 1 (250 aa).

Composition is skewed to basic and acidic residues over residues 1–14 (MEKGPVRAPAEKPR) and 35–44 (PAEKPPRPEA). A disordered region spans residues 1 to 64 (MEKGPVRAPA…GERPRSEEDN (64 aa)). A phosphoserine mark is found at Ser-60 and Ser-81. 3 residues coordinate Zn(2+): Cys-141, His-144, and Cys-212.

This sequence belongs to the GTP cyclohydrolase I family. In terms of assembly, toroid-shaped homodecamer, composed of a dimer of pentamers. The inactive isoforms also form decamers and may possibly be incorporated into GCH1 heterodecamers, decreasing enzyme stability and activity. Interacts with AHSA1 and GCHFR/GFRP. Phosphorylated by casein kinase II at Ser-81 in HAECs during oscillatory shear stress; phosphorylation at Ser-81 results in increased enzyme activity. In epidermis, expressed predominantly in basal undifferentiated keratinocytes and in some but not all melanocytes (at protein level).

It is found in the cytoplasm. It localises to the nucleus. The enzyme catalyses GTP + H2O = 7,8-dihydroneopterin 3'-triphosphate + formate + H(+). It functions in the pathway cofactor biosynthesis; 7,8-dihydroneopterin triphosphate biosynthesis; 7,8-dihydroneopterin triphosphate from GTP: step 1/1. GTP shows a positive allosteric effect, and tetrahydrobiopterin inhibits the enzyme activity. Zinc is required for catalytic activity. Inhibited by Mg(2+). Its function is as follows. Positively regulates nitric oxide synthesis in umbilical vein endothelial cells (HUVECs). May be involved in dopamine synthesis. May modify pain sensitivity and persistence. Isoform GCH-1 is the functional enzyme, the potential function of the enzymatically inactive isoforms remains unknown. The sequence is that of GTP cyclohydrolase 1 (GCH1) from Homo sapiens (Human).